The chain runs to 645 residues: COP9 signalosome complex subunit 10 (645 aa).

Residues 1 to 45 (MSDEDNNYDDFMLSDDEGMESIEMEEETDDEDKQNIEINEDNSQD) are compositionally biased toward acidic residues. A disordered region spans residues 1–63 (MSDEDNNYDD…HKQHEQGTFE (63 aa)). The span at 46–63 (DQDRGAARHKQHEQGTFE) shows a compositional bias: basic and acidic residues. Residues 348–543 (DLSFALMRYY…DLVYFGDENK (196 aa)) form the PCI domain.

As to quaternary structure, component of a COP9 signalosome-like (CSN) complex, composed of at least RRI1/CSN5, CSN9, RRI2/CSN10, PCI8/CSN11, CSN12 and CSI1. In the complex, it probably interacts directly with CSN12.

The protein localises to the cytoplasm. It is found in the nucleus. Its function is as follows. Component of the COP9 signalosome (CSN) complex that acts as an regulator of the ubiquitin (Ubl) conjugation pathway by mediating the deneddylation of the cullin subunit of SCF-type E3 ubiquitin-protein ligase complexes. The CSN complex is involved in the regulation of the mating pheromone response. In Saccharomyces cerevisiae (strain ATCC 204508 / S288c) (Baker's yeast), this protein is COP9 signalosome complex subunit 10 (RRI2).